The sequence spans 169 residues: 6,7-dimethyl-8-ribityllumazine synthase (169 aa).

Residues Tyr30, 61 to 63, and 90 to 92 each bind 5-amino-6-(D-ribitylamino)uracil; these read ALE and CVI. 95–96 contacts (2S)-2-hydroxy-3-oxobutyl phosphate; that stretch reads ET. The Proton donor role is filled by His98. 5-amino-6-(D-ribitylamino)uracil is bound at residue Asn123. Arg137 contributes to the (2S)-2-hydroxy-3-oxobutyl phosphate binding site.

This sequence belongs to the DMRL synthase family.

It catalyses the reaction (2S)-2-hydroxy-3-oxobutyl phosphate + 5-amino-6-(D-ribitylamino)uracil = 6,7-dimethyl-8-(1-D-ribityl)lumazine + phosphate + 2 H2O + H(+). It functions in the pathway cofactor biosynthesis; riboflavin biosynthesis; riboflavin from 2-hydroxy-3-oxobutyl phosphate and 5-amino-6-(D-ribitylamino)uracil: step 1/2. Catalyzes the formation of 6,7-dimethyl-8-ribityllumazine by condensation of 5-amino-6-(D-ribitylamino)uracil with 3,4-dihydroxy-2-butanone 4-phosphate. This is the penultimate step in the biosynthesis of riboflavin. The polypeptide is 6,7-dimethyl-8-ribityllumazine synthase (Methylorubrum populi (strain ATCC BAA-705 / NCIMB 13946 / BJ001) (Methylobacterium populi)).